We begin with the raw amino-acid sequence, 515 residues long: Ribose import ATP-binding protein RbsA 1 (515 aa).

ABC transporter domains lie at 8–244 (FQME…IGRE) and 256–503 (VPAT…LNIH). Residue 40–47 (GENGAGKS) coordinates ATP.

It belongs to the ABC transporter superfamily. Ribose importer (TC 3.A.1.2.1) family. As to quaternary structure, the complex is composed of an ATP-binding protein (RbsA), two transmembrane proteins (RbsC) and a solute-binding protein (RbsB).

The protein resides in the cell inner membrane. The enzyme catalyses D-ribose(out) + ATP + H2O = D-ribose(in) + ADP + phosphate + H(+). Functionally, part of the ABC transporter complex RbsABC involved in ribose import. Responsible for energy coupling to the transport system. The polypeptide is Ribose import ATP-binding protein RbsA 1 (Mesorhizobium japonicum (strain LMG 29417 / CECT 9101 / MAFF 303099) (Mesorhizobium loti (strain MAFF 303099))).